A 190-amino-acid chain; its full sequence is FMN reductase (NADH) RutF (190 aa).

Belongs to the non-flavoprotein flavin reductase family. RutF subfamily.

It catalyses the reaction FMNH2 + NAD(+) = FMN + NADH + 2 H(+). Catalyzes the reduction of FMN to FMNH2 which is used to reduce pyrimidine by RutA via the Rut pathway. The sequence is that of FMN reductase (NADH) RutF from Pantoea ananatis (strain LMG 20103).